The chain runs to 535 residues: uncharacterized protein (535 aa).

The chain crosses the membrane as a helical span at residues 17 to 37 (IVLLCMIGFFCTTFMRIHFAL). N44 and N61 each carry an N-linked (GlcNAc...) asparagine glycan. 6 helical membrane passes run 107-127 (LIFS…MFFI), 144-164 (ILVT…SVFL), 167-187 (IGMG…IGNW), 199-219 (IFTL…AAVC), 225-245 (WPAT…LWFF), and 292-312 (AFLG…LFQI). N-linked (GlcNAc...) asparagine glycosylation is present at N329. 5 helical membrane-spanning segments follow: residues 331–351 (TFTA…GIGI), 368–388 (VSHG…AFFV), 395–415 (TGLI…SGFY), 429–451 (MSAI…MSMF), and 463–483 (IFIG…LFGS).

It belongs to the major facilitator superfamily. Sodium/anion cotransporter family.

The protein resides in the membrane. This is an uncharacterized protein from Caenorhabditis elegans.